Reading from the N-terminus, the 525-residue chain is GMP synthase [glutamine-hydrolyzing] (525 aa).

One can recognise a Glutamine amidotransferase type-1 domain in the interval 9 to 207 (RILILDFGSQ…VRDICQCEAL (199 aa)). Residue cysteine 86 is the Nucleophile of the active site. Active-site residues include histidine 181 and glutamate 183. One can recognise a GMPS ATP-PPase domain in the interval 208–400 (WTPAKIIDDA…LGLPYDMLYR (193 aa)). 235-241 (SGGVDSS) provides a ligand contact to ATP.

As to quaternary structure, homodimer.

The enzyme catalyses XMP + L-glutamine + ATP + H2O = GMP + L-glutamate + AMP + diphosphate + 2 H(+). The protein operates within purine metabolism; GMP biosynthesis; GMP from XMP (L-Gln route): step 1/1. In terms of biological role, catalyzes the synthesis of GMP from XMP. This Escherichia coli O139:H28 (strain E24377A / ETEC) protein is GMP synthase [glutamine-hydrolyzing].